The chain runs to 208 residues: Interleukin-6 (208 aa).

Residues 1-29 (MNSLFTSAFSPLAVSLGLLLVMTSAFPTP) form the signal peptide. An N-linked (GlcNAc...) asparagine glycan is attached at N38. A disulfide bridge links C72 with C78. S81 carries the post-translational modification Phosphoserine. C101 and C111 are disulfide-bonded.

This sequence belongs to the IL-6 superfamily. As to quaternary structure, component of a hexamer of two molecules each of IL6, IL6R and IL6ST; first binds to IL6R to associate with the signaling subunit IL6ST. Interacts with IL6R (via the N-terminal ectodomain); this interaction may be affected by IL6R-binding with SORL1, hence decreasing IL6 cis signaling. Interacts with SORL1 (via the N-terminal ectodomain); this interaction leads to IL6 internalization and lysosomal degradation. May form a trimeric complex with the soluble SORL1 ectodomain and soluble IL6R receptor; this interaction might stabilize circulating IL6, hence promoting IL6 trans signaling.

The protein localises to the secreted. In terms of biological role, cytokine with a wide variety of biological functions in immunity, tissue regeneration, and metabolism. Binds to IL6R, then the complex associates to the signaling subunit IL6ST/gp130 to trigger the intracellular IL6-signaling pathway. The interaction with the membrane-bound IL6R and IL6ST stimulates 'classic signaling', whereas the binding of IL6 and soluble IL6R to IL6ST stimulates 'trans-signaling'. Alternatively, 'cluster signaling' occurs when membrane-bound IL6:IL6R complexes on transmitter cells activate IL6ST receptors on neighboring receiver cells. IL6 is a potent inducer of the acute phase response. Rapid production of IL6 contributes to host defense during infection and tissue injury, but excessive IL6 synthesis is involved in disease pathology. In the innate immune response, is synthesized by myeloid cells, such as macrophages and dendritic cells, upon recognition of pathogens through toll-like receptors (TLRs) at the site of infection or tissue injury. In the adaptive immune response, is required for the differentiation of B cells into immunoglobulin-secreting cells. Plays a major role in the differentiation of CD4(+) T cell subsets. Essential factor for the development of T follicular helper (Tfh) cells that are required for the induction of germinal-center formation. Required to drive naive CD4(+) T cells to the Th17 lineage. Also required for proliferation of myeloma cells and the survival of plasmablast cells. Its function is as follows. Acts as an essential factor in bone homeostasis and on vessels directly or indirectly by induction of VEGF, resulting in increased angiogenesis activity and vascular permeability. Induces, through 'trans-signaling' and synergistically with IL1B and TNF, the production of VEGF. Involved in metabolic controls, is discharged into the bloodstream after muscle contraction increasing lipolysis and improving insulin resistance. 'Trans-signaling' in central nervous system also regulates energy and glucose homeostasis. Mediates, through GLP-1, crosstalk between insulin-sensitive tissues, intestinal L cells and pancreatic islets to adapt to changes in insulin demand. Also acts as a myokine. Plays a protective role during liver injury, being required for maintenance of tissue regeneration. Also has a pivotal role in iron metabolism by regulating HAMP/hepcidin expression upon inflammation or bacterial infection. Through activation of IL6ST-YAP-NOTCH pathway, induces inflammation-induced epithelial regeneration. The sequence is that of Interleukin-6 (IL6) from Capra hircus (Goat).